A 197-amino-acid polypeptide reads, in one-letter code: Phosphoheptose isomerase (197 aa).

The region spanning 36–197 is the SIS domain; that stretch reads MTASLMNNGK…IDCLLLGVEE (162 aa). Substrate is bound at residue 51–53; it reads NGG. 2 residues coordinate Zn(2+): H60 and E64. Residues E64, 93–94, 119–121, S124, and Q174 contribute to the substrate site; these read ND and STS. Zn(2+)-binding residues include Q174 and H182.

It belongs to the SIS family. GmhA subfamily. In terms of assembly, homotetramer. Requires Zn(2+) as cofactor.

Its subcellular location is the cytoplasm. It carries out the reaction 2 D-sedoheptulose 7-phosphate = D-glycero-alpha-D-manno-heptose 7-phosphate + D-glycero-beta-D-manno-heptose 7-phosphate. It functions in the pathway carbohydrate biosynthesis; D-glycero-D-manno-heptose 7-phosphate biosynthesis; D-glycero-alpha-D-manno-heptose 7-phosphate and D-glycero-beta-D-manno-heptose 7-phosphate from sedoheptulose 7-phosphate: step 1/1. Functionally, catalyzes the isomerization of sedoheptulose 7-phosphate in D-glycero-D-manno-heptose 7-phosphate. In Azoarcus sp. (strain BH72), this protein is Phosphoheptose isomerase.